We begin with the raw amino-acid sequence, 212 residues long: Pyridoxine/pyridoxamine 5'-phosphate oxidase (212 aa).

Substrate-binding positions include 8–11 (RRSY) and Lys-66. FMN is bound by residues 61–66 (RIVLLK), 76–77 (FT), Arg-82, Lys-83, and Gln-105. Positions 123, 127, and 131 each coordinate substrate. Residues 140–141 (QS) and Trp-184 contribute to the FMN site. 190 to 192 (RLH) provides a ligand contact to substrate. Arg-194 serves as a coordination point for FMN.

This sequence belongs to the pyridoxamine 5'-phosphate oxidase family. Homodimer. Requires FMN as cofactor.

It carries out the reaction pyridoxamine 5'-phosphate + O2 + H2O = pyridoxal 5'-phosphate + H2O2 + NH4(+). It catalyses the reaction pyridoxine 5'-phosphate + O2 = pyridoxal 5'-phosphate + H2O2. Its pathway is cofactor metabolism; pyridoxal 5'-phosphate salvage; pyridoxal 5'-phosphate from pyridoxamine 5'-phosphate: step 1/1. It participates in cofactor metabolism; pyridoxal 5'-phosphate salvage; pyridoxal 5'-phosphate from pyridoxine 5'-phosphate: step 1/1. Catalyzes the oxidation of either pyridoxine 5'-phosphate (PNP) or pyridoxamine 5'-phosphate (PMP) into pyridoxal 5'-phosphate (PLP). The polypeptide is Pyridoxine/pyridoxamine 5'-phosphate oxidase (Cupriavidus necator (strain ATCC 17699 / DSM 428 / KCTC 22496 / NCIMB 10442 / H16 / Stanier 337) (Ralstonia eutropha)).